We begin with the raw amino-acid sequence, 300 residues long: GTPase Era (300 aa).

Residues 8 to 176 enclose the Era-type G domain; the sequence is RCGYVAIVGR…EAQIAKHLPE (169 aa). The segment at 16-23 is G1; the sequence is GRPNVGKS. Residue 16–23 coordinates GTP; it reads GRPNVGKS. The G2 stretch occupies residues 42–46; that stretch reads QTTRH. Residues 63-66 are G3; it reads DTPG. GTP is bound by residues 63–67 and 125–128; these read DTPGM and NKTD. The G4 stretch occupies residues 125–128; it reads NKTD. The interval 155–157 is G5; that stretch reads ISA. Residues 199 to 283 enclose the KH type-2 domain; it reads VREKIMRQLG…MLNLWVKVKG (85 aa).

The protein belongs to the TRAFAC class TrmE-Era-EngA-EngB-Septin-like GTPase superfamily. Era GTPase family. Monomer.

The protein resides in the cytoplasm. The protein localises to the cell inner membrane. Its function is as follows. An essential GTPase that binds both GDP and GTP, with rapid nucleotide exchange. Plays a role in 16S rRNA processing and 30S ribosomal subunit biogenesis and possibly also in cell cycle regulation and energy metabolism. The chain is GTPase Era from Pseudomonas putida (strain ATCC 700007 / DSM 6899 / JCM 31910 / BCRC 17059 / LMG 24140 / F1).